Consider the following 316-residue polypeptide: Olfactory receptor 1N2 (316 aa).

Topologically, residues 1–28 are extracellular; sequence MGKPGRVNQTTVSDFLLLGLSEWPEEQP. N-linked (GlcNAc...) asparagine glycosylation occurs at N8. The chain crosses the membrane as a helical span at residues 29–49; it reads LLFGIFLGMYLVTMVGNLLII. Over 50–60 the chain is Cytoplasmic; it reads LAISSDPHLHT. Residues 61–81 form a helical membrane-spanning segment; that stretch reads PMYFFLANLSLTDACFTSASI. Over 82 to 100 the chain is Extracellular; the sequence is PKMLANIHTQSQIISYSGC. Residues C100 and C182 are joined by a disulfide bond. The helical transmembrane segment at 101 to 121 threads the bilayer; sequence LAQLYFLLMFGGLDNCLLAVM. Residues 122–145 lie on the Cytoplasmic side of the membrane; that stretch reads AYDRYVAICQPLHYSTSMSPQLCA. A helical membrane pass occupies residues 146–166; that stretch reads LMLGVCWVLTNCPALMHTLLL. Topologically, residues 167-199 are extracellular; the sequence is TRVAFCAQKAIPHFYCDPSALLKLACSDTHVNE. The chain crosses the membrane as a helical span at residues 200 to 220; sequence LMIITMGLLFLTVPLLLIVFS. Topologically, residues 221–243 are cytoplasmic; sequence YVRIFWAVFVISSPGGRWKAFST. Residues 244–264 traverse the membrane as a helical segment; that stretch reads CGSHLTVVLLFYGSLMGVYLL. Residues 265–274 lie on the Extracellular side of the membrane; it reads PPSTYSTERE. The helical transmembrane segment at 275–295 threads the bilayer; sequence SRAAVLYMVIIPTLNPFIYSL. Residues 296–316 are Cytoplasmic-facing; the sequence is RNRDMKEALGKLFVSGKTFFL.

This sequence belongs to the G-protein coupled receptor 1 family.

Its subcellular location is the membrane. Odorant receptor. The protein is Olfactory receptor 1N2 (OR1N2) of Homo sapiens (Human).